A 560-amino-acid polypeptide reads, in one-letter code: Membrane protein insertase YidC (560 aa).

The helical transmembrane segment at methionine 1–leucine 21 threads the bilayer. A disordered region spans residues valine 42–alanine 66. The next 5 membrane-spanning stretches (helical) occupy residues leucine 341 to leucine 361, leucine 367 to phenylalanine 387, leucine 437 to leucine 457, tryptophan 468 to methionine 488, and proline 515 to valine 535.

It belongs to the OXA1/ALB3/YidC family. Type 1 subfamily. In terms of assembly, interacts with the Sec translocase complex via SecD. Specifically interacts with transmembrane segments of nascent integral membrane proteins during membrane integration.

Its subcellular location is the cell inner membrane. In terms of biological role, required for the insertion and/or proper folding and/or complex formation of integral membrane proteins into the membrane. Involved in integration of membrane proteins that insert both dependently and independently of the Sec translocase complex, as well as at least some lipoproteins. Aids folding of multispanning membrane proteins. In Pseudomonas putida (strain W619), this protein is Membrane protein insertase YidC.